A 251-amino-acid chain; its full sequence is Osmotin-like protein (251 aa).

The N-terminal stretch at 1–21 is a signal peptide; it reads MSHLTTFLVFFLLAFVTYTYA. Intrachain disulfides connect cysteine 31–cysteine 226, cysteine 73–cysteine 83, cysteine 88–cysteine 94, cysteine 142–cysteine 214, cysteine 147–cysteine 197, cysteine 155–cysteine 165, cysteine 169–cysteine 178, and cysteine 179–cysteine 184. The N-linked (GlcNAc...) asparagine glycan is linked to asparagine 233.

This sequence belongs to the thaumatin family.

The protein is Osmotin-like protein (OLPA) of Nicotiana tabacum (Common tobacco).